The chain runs to 432 residues: Mitochondrial distribution and morphology protein 12 (432 aa).

In terms of domain architecture, SMP-LTD spans 1 to 432; sequence MSIEVDWRAA…VFPSFWTFLI (432 aa). Disordered regions lie at residues 182–273 and 354–377; these read WTDP…PRMR and QQEA…PKRQ. Low complexity predominate over residues 214–234; sequence TSNPTSRPSTSSTLPSHPSAS. Basic and acidic residues-rich tracts occupy residues 243-253 and 355-364; these read TGKEHGSLAED and QEARGQDDRP.

The protein belongs to the MDM12 family. Component of the ER-mitochondria encounter structure (ERMES) or MDM complex, composed of mmm1, mdm10, mdm12 and mdm34. A mmm1 homodimer associates with one molecule of mdm12 on each side in a pairwise head-to-tail manner, and the SMP-LTD domains of mmm1 and mdm12 generate a continuous hydrophobic tunnel for phospholipid trafficking.

The protein resides in the mitochondrion outer membrane. The protein localises to the endoplasmic reticulum membrane. Functionally, component of the ERMES/MDM complex, which serves as a molecular tether to connect the endoplasmic reticulum (ER) and mitochondria. Components of this complex are involved in the control of mitochondrial shape and protein biogenesis, and function in nonvesicular lipid trafficking between the ER and mitochondria. Mdm12 is required for the interaction of the ER-resident membrane protein mmm1 and the outer mitochondrial membrane-resident beta-barrel protein mdm10. The mdm12-mmm1 subcomplex functions in the major beta-barrel assembly pathway that is responsible for biogenesis of all mitochondrial outer membrane beta-barrel proteins, and acts in a late step after the SAM complex. The mdm10-mdm12-mmm1 subcomplex further acts in the TOM40-specific pathway after the action of the mdm12-mmm1 complex. Essential for establishing and maintaining the structure of mitochondria and maintenance of mtDNA nucleoids. The sequence is that of Mitochondrial distribution and morphology protein 12 from Aspergillus oryzae (strain ATCC 42149 / RIB 40) (Yellow koji mold).